The chain runs to 48 residues: uncharacterized protein (48 aa).

The protein belongs to the ELIP/psbS family.

It localises to the plastid. The protein resides in the chloroplast. In terms of biological role, possible role in chlorophyll and/or carotenoid binding. This is an uncharacterized protein from Porphyra purpurea (Red seaweed).